The primary structure comprises 346 residues: Protein MelA (346 aa).

2 VOC domains span residues 12–141 (GIEF…DFEA) and 155–305 (EVDH…IFTK). Residues His-158, His-237, and Glu-314 each coordinate Fe cation.

The protein belongs to the 4HPPD family. It depends on Fe cation as a cofactor.

The protein resides in the cytoplasm. Its pathway is pigment biosynthesis; melanin biosynthesis. In Shewanella colwelliana (Alteromonas colwelliana), this protein is Protein MelA (melA).